Consider the following 205-residue polypeptide: MQPDLTLLGKLRSTWASATVNVIHPISLCLSWFLGTIGCSSPLPLRCADLRILLLKKKEFCLLPLFYHLGIFQHLFYPIIPLLAFCFYAPRLVCPAASLEFQRRYVVWILAVSRHIVFLENSYYIMLLHPHHLHHPHPPFLIFLFLILRKLRRNRSVKAQRIMQRSCHRLLFAPVGNDSELSAPSAPSESVVPLRRFNRQSVSTV.

4 helical membrane passes run 18 to 38 (ATVN…GTIG), 69 to 89 (LGIF…CFYA), 106 to 126 (VVWI…YYIM), and 127 to 147 (LLHP…LFLI).

Its subcellular location is the mitochondrion membrane. This is an uncharacterized protein from Arabidopsis thaliana (Mouse-ear cress).